Here is a 1503-residue protein sequence, read N- to C-terminus: E3 ubiquitin-protein ligase listerin (1503 aa).

14 HEAT repeats span residues 52–89, 93–129, 133–170, 280–318, 323–345, 346–384, 552–589, 640–663, 664–700, 845–882, 1022–1065, 1078–1117, 1141–1183, and 1302–1340; these read SGID…ETSS, CYEH…KLEK, KGLK…ADKK, LNTP…SAQF, SLQN…HWRV, LQHF…NLPW, GDIV…TGGS, AENV…NEAE, KNVL…DFNS, LEKR…LDDS, TLFI…RMFR, RTLL…SLLE, AAAK…VMIS, and FKSI…KLLI. The RING-type zinc finger occupies 1446–1499; the sequence is CTICMMTVHQQTNQLPKVKCKQCKNRFHSNCLVSSFHTYKWFESSNQSTCPLCR.

It belongs to the LTN1 family. In terms of assembly, component of the ribosome quality control complex (RQC), composed of at least the E3 ubiquitin ligase ltn1 and nemf. The complex probably also contains tcf25 as well as vcp/p97 and its ubiquitin-binding cofactors. RQC forms a stable complex with 60S ribosomal subunits.

The protein localises to the cytoplasm. Its subcellular location is the cytosol. The enzyme catalyses S-ubiquitinyl-[E2 ubiquitin-conjugating enzyme]-L-cysteine + [acceptor protein]-L-lysine = [E2 ubiquitin-conjugating enzyme]-L-cysteine + N(6)-ubiquitinyl-[acceptor protein]-L-lysine.. Its pathway is protein modification; protein ubiquitination. Its function is as follows. E3 ubiquitin-protein ligase. Component of the ribosome quality control complex (RQC), a ribosome-associated complex that mediates ubiquitination and extraction of incompletely synthesized nascent chains for proteasomal degradation. Ubiquitination leads to vcp/p97 recruitment for extraction and degradation of the incomplete translation product. The protein is E3 ubiquitin-protein ligase listerin of Caenorhabditis briggsae.